A 335-amino-acid polypeptide reads, in one-letter code: Phosphatidylcholine-sterol acyltransferase (335 aa).

A signal peptide spans 1-18; it reads MKKWFVCLLGLVALTVQA. The Nucleophile role is filled by Ser-34. Active-site residues include Asp-306 and His-309.

Belongs to the 'GDSL' lipolytic enzyme family.

It carries out the reaction a sterol + a 1,2-diacyl-sn-glycero-3-phosphocholine = a sterol ester + a 1-acyl-sn-glycero-3-phosphocholine. Functionally, fatty acid transfer between phosphatidylcholine and cholesterol. This chain is Phosphatidylcholine-sterol acyltransferase, found in Aeromonas hydrophila.